The primary structure comprises 244 residues: MAAPSDGFKPRERSGGEQAQDWDALPPKRPRLGAGNKIGGRRLIVVLEGASLETVKVGKTYELLNCDKHKSILLKNGRDPGEARPDITHQSLLMLMDSPLNRAGLLQVYIHTQKNVLIEVNPQTRIPRTFDRFCGLMVQLLHKLSVRAADGPQKLLKVIKNPVSDHFPVGCMKVGTSFSIPVVSDVRELVPSSDPIVFVVGAFAHGKVSVEYTEKMVSISNYPLSAALTCAKLTTAFEEVWGVI.

The disordered stretch occupies residues 1 to 34 (MAAPSDGFKPRERSGGEQAQDWDALPPKRPRLGA). An N-acetylalanine modification is found at alanine 2. Residues serine 5 and serine 14 each carry the phosphoserine modification. Residues threonine 176, glycine 201, glycine 206, and 219 to 224 (ISNYPL) contribute to the S-adenosyl-L-methionine site.

Belongs to the class IV-like SAM-binding methyltransferase superfamily. RNA methyltransferase NEP1 family. As to quaternary structure, homodimer. Part of the small subunit (SSU) processome, composed of more than 70 proteins and the RNA chaperone small nucleolar RNA (snoRNA) U3.

Its subcellular location is the nucleus. The protein resides in the nucleolus. The enzyme catalyses pseudouridine(1248) in human 18S rRNA + S-adenosyl-L-methionine = N(1)-methylpseudouridine(1248) in human 18S rRNA + S-adenosyl-L-homocysteine + H(+). S-adenosyl-L-methionine-dependent pseudouridine N(1)-methyltransferase that methylates pseudouridine at position 1248 (Psi1248) in 18S rRNA. Involved the biosynthesis of the hypermodified N1-methyl-N3-(3-amino-3-carboxypropyl) pseudouridine (m1acp3-Psi) conserved in eukaryotic 18S rRNA. Is not able to methylate uridine at this position. Also has an essential role in 40S ribosomal subunit biogenesis independent on its methyltransferase activity, facilitating the incorporation of ribosomal protein S19 during the formation of pre-ribosomes. Part of the small subunit (SSU) processome, first precursor of the small eukaryotic ribosomal subunit. During the assembly of the SSU processome in the nucleolus, many ribosome biogenesis factors, an RNA chaperone and ribosomal proteins associate with the nascent pre-rRNA and work in concert to generate RNA folding, modifications, rearrangements and cleavage as well as targeted degradation of pre-ribosomal RNA by the RNA exosome. The protein is Ribosomal RNA small subunit methyltransferase NEP1 of Homo sapiens (Human).